The chain runs to 234 residues: Exotoxin type G (234 aa).

A signal peptide spans Met1–Ala24.

Belongs to the staphylococcal/streptococcal toxin family.

Functionally, mitogenic for human peripheral blood lymphocytes. This chain is Exotoxin type G (speG), found in Streptococcus pyogenes serotype M3 (strain ATCC BAA-595 / MGAS315).